A 578-amino-acid polypeptide reads, in one-letter code: Leucine-rich repeat-containing protein 15 (578 aa).

The first 21 residues, 1 to 21, serve as a signal peptide directing secretion; the sequence is MPLKHYLLLLVGCQAWALGLA. Residues 22 to 53 form the LRRNT domain; that stretch reads YYGCPSECTCSRASQVECTGARIVAMPTPLPW. Over 22–535 the chain is Extracellular; that stretch reads YYGCPSECTC…TWGMTEAQSG (514 aa). LRR repeat units follow at residues 54-75, 78-99, 102-123, 126-147, 150-171, 174-195, 198-219, 222-243, 246-267, 270-291, 294-315, 318-339, 342-363, 366-387, and 390-411; these read NAMS…LFLN, ALIA…AFRN, SLRY…VFQD, NLES…QFSQ, NLRE…AFDH, GLTK…LFQH, NLQV…TFDA, NLQE…LFHN, NLQR…IFMQ, QLNK…VFGP, NLRE…TFSH, QLQV…AFNG, NLRE…VFRS, NLQN…IFAN, and GLTT…IFDH. An N-linked (GlcNAc...) asparagine glycan is attached at asparagine 75. The N-linked (GlcNAc...) asparagine glycan is linked to asparagine 369. The 51-residue stretch at 423 to 473 folds into the LRRCT domain; it reads NPWRCDSDILPLHNWLLLNRARLGTDTLPVCSSPANVRGQSLVIININFPG. Residues 476 to 500 are disordered; sequence VQGPETPEVPSYPDTPSYPDTTSVS. A helical transmembrane segment spans residues 536–556; that stretch reads LAIAAIVIGIIALACSLAACI. The Cytoplasmic segment spans residues 557 to 578; that stretch reads CCCCCKKRSQAVLMQMKAPNEC.

The protein localises to the cell membrane. In Rattus norvegicus (Rat), this protein is Leucine-rich repeat-containing protein 15 (Lrrc15).